The following is a 99-amino-acid chain: Probable small ribosomal subunit protein cS23 (99 aa).

Belongs to the chloroplast-specific ribosomal protein cS23 family. In terms of assembly, part of the 30S ribosomal subunit.

Its function is as follows. Probably a ribosomal protein or a ribosome-associated protein. In Synechococcus sp. (strain JA-3-3Ab) (Cyanobacteria bacterium Yellowstone A-Prime), this protein is Probable small ribosomal subunit protein cS23.